A 169-amino-acid chain; its full sequence is Ureidoglycolate lyase (169 aa).

Belongs to the ureidoglycolate lyase family. Homodimer. Ni(2+) is required as a cofactor.

It catalyses the reaction (S)-ureidoglycolate = urea + glyoxylate. It functions in the pathway nitrogen metabolism; (S)-allantoin degradation. Functionally, catalyzes the catabolism of the allantoin degradation intermediate (S)-ureidoglycolate, generating urea and glyoxylate. Involved in the utilization of allantoin as nitrogen source. The protein is Ureidoglycolate lyase of Brucella abortus biovar 1 (strain 9-941).